A 414-amino-acid polypeptide reads, in one-letter code: Esterase FrsA (414 aa).

It belongs to the FrsA family.

It carries out the reaction a carboxylic ester + H2O = an alcohol + a carboxylate + H(+). Functionally, catalyzes the hydrolysis of esters. The polypeptide is Esterase FrsA (Klebsiella pneumoniae (strain 342)).